The chain runs to 516 residues: Maturase K (516 aa).

The protein belongs to the intron maturase 2 family. MatK subfamily.

It localises to the plastid. It is found in the chloroplast. Functionally, usually encoded in the trnK tRNA gene intron. Probably assists in splicing its own and other chloroplast group II introns. This Galanthus nivalis (Common snowdrop) protein is Maturase K.